The primary structure comprises 140 residues: Blasticidin-S deaminase (140 aa).

The CMP/dCMP-type deaminase domain maps to glutamine 8–asparagine 140. Zn(2+) is bound at residue cysteine 59. Glutamate 61 serves as the catalytic Proton donor. The Zn(2+) site is built by cysteine 100 and cysteine 103.

This sequence belongs to the cytidine and deoxycytidylate deaminase family. It depends on Zn(2+) as a cofactor.

It carries out the reaction blasticidin S + H2O + H(+) = deaminohydroxyblasticidin S + NH4(+). Catalyzes the deamination of the cytosine moiety of the antibiotics blasticidin S, cytomycin and acetylblasticidin S. This Bacillus cereus protein is Blasticidin-S deaminase (bsr).